The chain runs to 328 residues: GMP reductase (328 aa).

Cys-174 functions as the Thioimidate intermediate in the catalytic mechanism. 203–226 (IIADGGIRTHGDIAKSIRFGASMV) is a binding site for NADP(+).

The protein belongs to the IMPDH/GMPR family. GuaC type 2 subfamily.

It catalyses the reaction IMP + NH4(+) + NADP(+) = GMP + NADPH + 2 H(+). In terms of biological role, catalyzes the irreversible NADPH-dependent deamination of GMP to IMP. It functions in the conversion of nucleobase, nucleoside and nucleotide derivatives of G to A nucleotides, and in maintaining the intracellular balance of A and G nucleotides. The sequence is that of GMP reductase from Staphylococcus saprophyticus subsp. saprophyticus (strain ATCC 15305 / DSM 20229 / NCIMB 8711 / NCTC 7292 / S-41).